The chain runs to 94 residues: Small ribosomal subunit protein uS19 (94 aa).

This sequence belongs to the universal ribosomal protein uS19 family.

Its function is as follows. Protein S19 forms a complex with S13 that binds strongly to the 16S ribosomal RNA. This is Small ribosomal subunit protein uS19 from Carboxydothermus hydrogenoformans (strain ATCC BAA-161 / DSM 6008 / Z-2901).